The chain runs to 356 residues: Alanine racemase (356 aa).

K35 (proton acceptor; specific for D-alanine) is an active-site residue. K35 carries the post-translational modification N6-(pyridoxal phosphate)lysine. Residue R130 participates in substrate binding. Y253 acts as the Proton acceptor; specific for L-alanine in catalysis. Substrate is bound at residue M301.

It belongs to the alanine racemase family. The cofactor is pyridoxal 5'-phosphate.

It catalyses the reaction L-alanine = D-alanine. Its pathway is amino-acid biosynthesis; D-alanine biosynthesis; D-alanine from L-alanine: step 1/1. Catalyzes the interconversion of L-alanine and D-alanine. May also act on other amino acids. This is Alanine racemase (alr) from Burkholderia mallei (strain NCTC 10229).